A 940-amino-acid chain; its full sequence is MHFHGIATQAVLASNITTGSGRHVSLSDVKWTLSSSALNSTVPASLPSQAHLDLLNAGVIDDPYYGLNEIDLQWIAQANWTYTSDPIPDLLEEYESTWLVFEGLDTFATVTFCGHNIASTNNQFRQYAFDVSSALKECTGGPVVRIDFASAPNTVDAIAADPKTPVWPVQLTAQLPNRWLMRKQQSDFGWDWGPAFAPCGPWKPAYVVQLEKTAPIHVLNTDLDIYRQGNINHLPPDQKQPWVVNASIDFIGRLPAEPRLLIEIKELETGDVLASQISDSVTLIGTSITGVTTLKDASPKLWWPSSLGAQNLYNVTITVFNKTEEVARITKRTGFRTIFLNQRNITATQLSQGIAPGANWHFEVNGKEFYAKGSNFIPPDTFWPRVTKQKMTRLLDAVVAGNQNMLRIWSSGAYLPDFIYDLADERGILLWSEFQFSDSMYPVDEDFLDNVAQEVVYNVRRVNHHPSLALWAGGNEIESLMLPLTREADPDNYPKYLAEYEKLYISLILPLVYENTRSISYSPSSTTEGYLSVNLSAPVPMTERYENDEPGAYYGDTDYYNYDTTVSFDYSIYPVGRFANEFGFHSMPSLQTWQQVADPEDLYFNSTTVVIHNRHYTSEGYGRIENSSRGMAEMTLGVERYYPIPDNPDSVANFSAWCLATQLFQADFYKSQIQFYRRGSGMPERQLGSLYWQLEDIWQGPTWAGIEYDGRWKVLHYVARDVYQPIIVSPFWNYTTGDLEIYVTADLWESAAGTVNLKWLNLSGEQIIDNAGTPTEIPFTVGAINTTKVYSTNIHDLNLPDTRASILTLSLSSQANLPNAAVKTSLTHENHFTPSFPKDLELVNPGLELSYDAHSGIFTVEAKSGVSLYTWLDYPAGLVGYFTENAFLLVPGQKKKVQFVVQDGPKDQDWEWQSEVTVRSLWDQKSSTFLYALRVATGRP.

A signal peptide spans 1-21 (MHFHGIATQAVLASNITTGSG). Asparagine 15, asparagine 39, asparagine 79, asparagine 245, asparagine 314, asparagine 321, and asparagine 344 each carry an N-linked (GlcNAc...) asparagine glycan. Glutamate 476 functions as the Proton donor in the catalytic mechanism. Asparagine 534, asparagine 605, asparagine 626, asparagine 653, asparagine 733, asparagine 761, and asparagine 785 each carry an N-linked (GlcNAc...) asparagine glycan.

The protein belongs to the glycosyl hydrolase 2 family. Beta-mannosidase A subfamily. In terms of assembly, homodimer.

It is found in the secreted. The enzyme catalyses Hydrolysis of terminal, non-reducing beta-D-mannose residues in beta-D-mannosides.. It participates in glycan metabolism; N-glycan degradation. Functionally, exoglycosidase that cleaves the single beta-linked mannose residue from the non-reducing end of beta-mannosidic oligosaccharides of various complexity and length. Involved in the degradation of polymeric mannan and galactomannan. The chain is Beta-mannosidase A (mndA) from Emericella nidulans (strain FGSC A4 / ATCC 38163 / CBS 112.46 / NRRL 194 / M139) (Aspergillus nidulans).